The sequence spans 566 residues: DNA ligase B (566 aa).

Lys-125 (N6-AMP-lysine intermediate) is an active-site residue.

It belongs to the NAD-dependent DNA ligase family. LigB subfamily.

It carries out the reaction NAD(+) + (deoxyribonucleotide)n-3'-hydroxyl + 5'-phospho-(deoxyribonucleotide)m = (deoxyribonucleotide)n+m + AMP + beta-nicotinamide D-nucleotide.. Its function is as follows. Catalyzes the formation of phosphodiester linkages between 5'-phosphoryl and 3'-hydroxyl groups in double-stranded DNA using NAD as a coenzyme and as the energy source for the reaction. The polypeptide is DNA ligase B (Pseudomonas putida (strain ATCC 700007 / DSM 6899 / JCM 31910 / BCRC 17059 / LMG 24140 / F1)).